A 108-amino-acid chain; its full sequence is Cell cycle protein GpsB (108 aa).

Positions 32–69 (LDNVIKDYENFNAQIEALKAENEALKKAKYQARNTVSA) form a coiled coil.

It belongs to the GpsB family. Forms polymers through the coiled coil domains. Interacts with PBP1, MreC and EzrA.

Its subcellular location is the cytoplasm. Functionally, divisome component that associates with the complex late in its assembly, after the Z-ring is formed, and is dependent on DivIC and PBP2B for its recruitment to the divisome. Together with EzrA, is a key component of the system that regulates PBP1 localization during cell cycle progression. Its main role could be the removal of PBP1 from the cell pole after pole maturation is completed. Also contributes to the recruitment of PBP1 to the division complex. Not essential for septum formation. This chain is Cell cycle protein GpsB, found in Streptococcus pyogenes serotype M49 (strain NZ131).